The primary structure comprises 720 residues: ATP-dependent DNA helicase Hel308 (720 aa).

ATP contacts are provided by residues Ser-23, Gln-28, and 46–53 (IPTASGKT). Residues 33–197 (KSGILEGKNA…WLNAELIVSD (165 aa)) form the Helicase ATP-binding domain. The short motif at 145–148 (DEIH) is the DEAH box element. One can recognise a Helicase C-terminal domain in the interval 229 to 422 (LVYDAIRKKK…NLRSQVLALI (194 aa)).

Belongs to the helicase family. Hel308 subfamily. In terms of assembly, monomer. Interacts with PCNA. The cofactor is Mg(2+). Zn(2+) is required as a cofactor.

It carries out the reaction Couples ATP hydrolysis with the unwinding of duplex DNA by translocating in the 3'-5' direction.. It catalyses the reaction ATP + H2O = ADP + phosphate + H(+). DNA-dependent ATPase and 3'-5' DNA helicase that may be involved in repair of stalled replication forks. Unwinds the lagging strand from forked DNA structures in a 3'-5' direction. PCNA, the DNA polymerase sliding clamp subunit, stimulates the helicase activity, and may alter substrate specificity. Unwinds branched DNA (Holliday junctions) in an ATP-dependent fashion; ss- and dsDNA stimulate ATPase to the greatest extent, although it preferentially binds DNA with a single-stranded region. Processes a RecA-mediated recombination intermediate between gapped circular and homologous linear dsDNA. The polypeptide is ATP-dependent DNA helicase Hel308 (Pyrococcus furiosus (strain ATCC 43587 / DSM 3638 / JCM 8422 / Vc1)).